The following is an 806-amino-acid chain: Leucine--tRNA ligase (806 aa).

Residues 54–64 (SYPSGDLHMGH) carry the 'HIGH' region motif. Residues 571-575 (KMSKS) carry the 'KMSKS' region motif. Residue Lys-574 participates in ATP binding.

This sequence belongs to the class-I aminoacyl-tRNA synthetase family.

It is found in the cytoplasm. The catalysed reaction is tRNA(Leu) + L-leucine + ATP = L-leucyl-tRNA(Leu) + AMP + diphosphate. In Tropheryma whipplei (strain TW08/27) (Whipple's bacillus), this protein is Leucine--tRNA ligase.